Here is a 258-residue protein sequence, read N- to C-terminus: 6-carboxyhexanoate--CoA ligase (258 aa).

Belongs to the BioW family. Homodimer. It depends on Mg(2+) as a cofactor.

It catalyses the reaction heptanedioate + ATP + CoA = 6-carboxyhexanoyl-CoA + AMP + diphosphate. Its pathway is metabolic intermediate metabolism; pimeloyl-CoA biosynthesis; pimeloyl-CoA from pimelate: step 1/1. Its function is as follows. Catalyzes the transformation of pimelate into pimeloyl-CoA with concomitant hydrolysis of ATP to AMP. This chain is 6-carboxyhexanoate--CoA ligase, found in Bacillus subtilis (strain BSn5).